The sequence spans 321 residues: tRNA-dihydrouridine synthase B (321 aa).

FMN-binding positions include 16–18 (PMA) and Gln-70. Cys-100 acts as the Proton donor in catalysis. FMN-binding positions include Lys-139, 200–202 (NGD), and 224–225 (GR).

The protein belongs to the Dus family. DusB subfamily. It depends on FMN as a cofactor.

The catalysed reaction is a 5,6-dihydrouridine in tRNA + NAD(+) = a uridine in tRNA + NADH + H(+). It carries out the reaction a 5,6-dihydrouridine in tRNA + NADP(+) = a uridine in tRNA + NADPH + H(+). Catalyzes the synthesis of 5,6-dihydrouridine (D), a modified base found in the D-loop of most tRNAs, via the reduction of the C5-C6 double bond in target uridines. This is tRNA-dihydrouridine synthase B from Yersinia pestis.